Reading from the N-terminus, the 97-residue chain is Co-chaperonin GroES (97 aa).

This sequence belongs to the GroES chaperonin family. As to quaternary structure, heptamer of 7 subunits arranged in a ring. Interacts with the chaperonin GroEL.

Its subcellular location is the cytoplasm. Functionally, together with the chaperonin GroEL, plays an essential role in assisting protein folding. The GroEL-GroES system forms a nano-cage that allows encapsulation of the non-native substrate proteins and provides a physical environment optimized to promote and accelerate protein folding. GroES binds to the apical surface of the GroEL ring, thereby capping the opening of the GroEL channel. This chain is Co-chaperonin GroES, found in Blochmanniella pennsylvanica (strain BPEN).